We begin with the raw amino-acid sequence, 61 residues long: U-stichotoxin-Hcr1b (61 aa).

A signal peptide spans 1 to 19 (PILIFAFVMFAVMVNAKPS). The propeptide occupies 20 to 31 (IDDAEMKREPKP). Cystine bridges form between Cys-38-Cys-49 and Cys-41-Cys-56.

This sequence belongs to the Hau1a/HC18/HC19 family.

Its subcellular location is the secreted. It localises to the nematocyst. Functionally, toxin that is lethal to crab. Does not produce the typical symptoms associated with sodium channel toxins in crabs, suggesting that it likely does not act on sodium channels. The polypeptide is U-stichotoxin-Hcr1b (Radianthus crispa (Leathery sea anemone)).